A 30-amino-acid polypeptide reads, in one-letter code: Ampulexin 3 (30 aa).

Positions 1-17 (MKAIMVLFYVMTLTIIG) are cleaved as a signal peptide.

In terms of assembly, monomer. Expressed in venom sac and, to a lesser extent, in venom gland. Not expressed in brain.

It is found in the secreted. This chain is Ampulexin 3, found in Ampulex compressa (Emerald cockroach wasp).